The chain runs to 413 residues: Tryptophan synthase beta chain (413 aa).

K106 carries the post-translational modification N6-(pyridoxal phosphate)lysine.

Belongs to the TrpB family. Tetramer of two alpha and two beta chains. Requires pyridoxal 5'-phosphate as cofactor.

The catalysed reaction is (1S,2R)-1-C-(indol-3-yl)glycerol 3-phosphate + L-serine = D-glyceraldehyde 3-phosphate + L-tryptophan + H2O. It functions in the pathway amino-acid biosynthesis; L-tryptophan biosynthesis; L-tryptophan from chorismate: step 5/5. The beta subunit is responsible for the synthesis of L-tryptophan from indole and L-serine. The chain is Tryptophan synthase beta chain from Methylobacterium radiotolerans (strain ATCC 27329 / DSM 1819 / JCM 2831 / NBRC 15690 / NCIMB 10815 / 0-1).